A 282-amino-acid polypeptide reads, in one-letter code: B3 domain-containing protein At5g06250 (282 aa).

A DNA-binding region (TF-B3) is located at residues 46-159 (FEKSLTPSDV…RLFIGWRRRG (114 aa)).

Its subcellular location is the nucleus. This is B3 domain-containing protein At5g06250 from Arabidopsis thaliana (Mouse-ear cress).